The primary structure comprises 874 residues: Leucine--tRNA ligase (874 aa).

The 'HIGH' region signature appears at 43–53; it reads PYPSGRIHIGH. Positions 630 to 634 match the 'KMSKS' region motif; that stretch reads KMSKS. Lys633 lines the ATP pocket.

The protein belongs to the class-I aminoacyl-tRNA synthetase family.

Its subcellular location is the cytoplasm. It carries out the reaction tRNA(Leu) + L-leucine + ATP = L-leucyl-tRNA(Leu) + AMP + diphosphate. This chain is Leucine--tRNA ligase, found in Bradyrhizobium sp. (strain ORS 278).